Reading from the N-terminus, the 510-residue chain is D-alanine--D-alanyl carrier protein ligase (510 aa).

157–158 (TS) contacts ATP. Residue Asp-202 participates in D-alanine binding. 297–302 (NTYGPT) contacts ATP. Val-306 serves as a coordination point for D-alanine. Asp-389 and Lys-498 together coordinate ATP. D-alanine is bound at residue Lys-498.

The protein belongs to the ATP-dependent AMP-binding enzyme family. DltA subfamily.

It is found in the cytoplasm. The enzyme catalyses holo-[D-alanyl-carrier protein] + D-alanine + ATP = D-alanyl-[D-alanyl-carrier protein] + AMP + diphosphate. The protein operates within cell wall biogenesis; lipoteichoic acid biosynthesis. In terms of biological role, catalyzes the first step in the D-alanylation of lipoteichoic acid (LTA), the activation of D-alanine and its transfer onto the D-alanyl carrier protein (Dcp) DltC. In an ATP-dependent two-step reaction, forms a high energy D-alanyl-AMP intermediate, followed by transfer of the D-alanyl residue as a thiol ester to the phosphopantheinyl prosthetic group of the Dcp. D-alanylation of LTA plays an important role in modulating the properties of the cell wall in Gram-positive bacteria, influencing the net charge of the cell wall. The polypeptide is D-alanine--D-alanyl carrier protein ligase (Listeria monocytogenes serotype 4b (strain CLIP80459)).